Consider the following 135-residue polypeptide: Small ribosomal subunit protein uS11 (135 aa).

The tract at residues 1–26 is disordered; it reads MPPKSRTAGGARKTRRKEKKNVSHGH. Residues 12–23 show a composition bias toward basic residues; it reads RKTRRKEKKNVS.

Belongs to the universal ribosomal protein uS11 family. As to quaternary structure, part of the 30S ribosomal subunit. Interacts with proteins S7 and S18. Binds to IF-3.

Its function is as follows. Located on the platform of the 30S subunit, it bridges several disparate RNA helices of the 16S rRNA. Forms part of the Shine-Dalgarno cleft in the 70S ribosome. The sequence is that of Small ribosomal subunit protein uS11 from Beutenbergia cavernae (strain ATCC BAA-8 / DSM 12333 / CCUG 43141 / JCM 11478 / NBRC 16432 / NCIMB 13614 / HKI 0122).